The primary structure comprises 244 residues: Coenzyme Q-binding protein COQ10 homolog B, mitochondrial (244 aa).

The protein belongs to the COQ10 family. As to quaternary structure, interacts with coenzyme Q.

Its subcellular location is the mitochondrion inner membrane. Required for the function of coenzyme Q in the respiratory chain. May serve as a chaperone or may be involved in the transport of Q6 from its site of synthesis to the catalytic sites of the respiratory complexes. This Xenopus laevis (African clawed frog) protein is Coenzyme Q-binding protein COQ10 homolog B, mitochondrial (coq10b).